We begin with the raw amino-acid sequence, 240 residues long: 2,3,4,5-tetrahydropyridine-2,6-dicarboxylate N-acetyltransferase (240 aa).

This sequence belongs to the transferase hexapeptide repeat family. DapH subfamily.

It carries out the reaction (S)-2,3,4,5-tetrahydrodipicolinate + acetyl-CoA + H2O = L-2-acetamido-6-oxoheptanedioate + CoA. Its pathway is amino-acid biosynthesis; L-lysine biosynthesis via DAP pathway; LL-2,6-diaminopimelate from (S)-tetrahydrodipicolinate (acetylase route): step 1/3. Catalyzes the transfer of an acetyl group from acetyl-CoA to tetrahydrodipicolinate. In Halalkalibacterium halodurans (strain ATCC BAA-125 / DSM 18197 / FERM 7344 / JCM 9153 / C-125) (Bacillus halodurans), this protein is 2,3,4,5-tetrahydropyridine-2,6-dicarboxylate N-acetyltransferase.